Here is a 733-residue protein sequence, read N- to C-terminus: Putative cyclic nucleotide-gated ion channel 9 (733 aa).

Residues 1–117 are Cytoplasmic-facing; sequence MLDCGKKAVK…DKFLLLCNKL (117 aa). A helical membrane pass occupies residues 118 to 138; sequence FVTSCILAVSVDPLFLYLPFV. The Extracellular segment spans residues 139–151; sequence KDNEKCIGIDRKL. The chain crosses the membrane as a helical span at residues 152 to 172; it reads AIIATTLRTVIDAFYLFHMAL. Residues 173–207 lie on the Cytoplasmic side of the membrane; the sequence is RFRTAFVAPSSRVFGRGELVIDPAQIAKRYLQQYF. Residues 208-228 form a helical membrane-spanning segment; it reads IIDFLSVLPLPQIVVWRFLYI. Residues 229–239 are Extracellular-facing; the sequence is SKGASVLATKR. The helical transmembrane segment at 240–260 threads the bilayer; that stretch reads ALRSIILVQYIPRFIRLYPLS. Residues 261 to 280 are Cytoplasmic-facing; sequence SELKRTAGVFAETAWAGAAY. Residues 281–301 traverse the membrane as a helical segment; that stretch reads YLLLYMLASHIVGAIWYLLAL. At 302–406 the chain is on the extracellular side; it reads ERYNGCWTKV…GQGLETSTYP (105 aa). The helical transmembrane segment at 407-427 threads the bilayer; that stretch reads GEVIFSIALAIAGLLLFALLI. The Cytoplasmic portion of the chain corresponds to 428–733; sequence GNMQTYLQSL…EPDFSADDTS (306 aa). Residues 513-637 and Glu584 contribute to the a nucleoside 3',5'-cyclic phosphate site; that span reads LFEN…SRQV. Residues 629–644 form a calmodulin-binding region; that stretch reads FRRLHSRQVQHTFRFY. The region spanning 649 to 678 is the IQ domain; sequence RTWAAIFIQAAWRRYVKKKKLEQLRKEEEE.

Belongs to the cyclic nucleotide-gated cation channel (TC 1.A.1.5) family. In terms of assembly, homotetramer or heterotetramer.

It is found in the cell membrane. Its function is as follows. Putative cyclic nucleotide-gated ion channel. The sequence is that of Putative cyclic nucleotide-gated ion channel 9 (CNGC9) from Arabidopsis thaliana (Mouse-ear cress).